The chain runs to 496 residues: Cytochrome P450 71D180 (496 aa).

The chain crosses the membrane as a helical; Signal-anchor for type II membrane protein span at residues 1–21 (MDISISWVVIIVFVLSYLILM). Cys-435 contacts heme.

The protein belongs to the cytochrome P450 family. Heme serves as cofactor. As to expression, mostly expressed in flowers and, to a lower extent, in leaves, especially in glandular trichomes.

It is found in the membrane. It carries out the reaction (4R)-limonene + reduced [NADPH--hemoprotein reductase] + O2 = (1R,5S)-carveol + oxidized [NADPH--hemoprotein reductase] + H2O + H(+). The enzyme catalyses (4S)-limonene + reduced [NADPH--hemoprotein reductase] + O2 = (1S,5R)-carveol + oxidized [NADPH--hemoprotein reductase] + H2O + H(+). It catalyses the reaction gamma-terpinene + 2 reduced [NADPH--hemoprotein reductase] + 2 O2 = carvacrol + 2 oxidized [NADPH--hemoprotein reductase] + 3 H2O + 2 H(+). It functions in the pathway secondary metabolite biosynthesis; terpenoid biosynthesis. Involved in the biosynthesis of phenolic monoterpenes natural products thymol and carvacrol which have a broad range of biological activities acting as antimicrobial compounds, insecticides, antioxidants and pharmaceutical agents. Catalyzes the C2-hydroxylation of gamma-terpinene to produce carvacrol. Mediates also the C6-hydroxylation of (4S)-limonene and (4R)-limonene to form carveol. In Thymus vulgaris (Thyme), this protein is Cytochrome P450 71D180.